Reading from the N-terminus, the 452-residue chain is Ethanolamine kinase 1 (452 aa).

The disordered stretch occupies residues 26–64 (AVQTRIGNSAASRRSPAARPPVPAPPALPRGRPGTEGST). The span at 43-53 (ARPPVPAPPAL) shows a compositional bias: pro residues.

Belongs to the choline/ethanolamine kinase family. As to expression, expressed in kidney, liver, placenta, heart, leukocyte, ovary and testis.

Its subcellular location is the cytoplasm. The enzyme catalyses ethanolamine + ATP = phosphoethanolamine + ADP + H(+). Its pathway is phospholipid metabolism; phosphatidylethanolamine biosynthesis; phosphatidylethanolamine from ethanolamine: step 1/3. Functionally, highly specific for ethanolamine phosphorylation. May be a rate-controlling step in phosphatidylethanolamine biosynthesis. This Homo sapiens (Human) protein is Ethanolamine kinase 1.